The following is a 175-amino-acid chain: ATP-dependent protease subunit HslV (175 aa).

Thr-2 is a catalytic residue. Na(+)-binding residues include Gly-157, Cys-160, and Thr-163.

This sequence belongs to the peptidase T1B family. HslV subfamily. In terms of assembly, a double ring-shaped homohexamer of HslV is capped on each side by a ring-shaped HslU homohexamer. The assembly of the HslU/HslV complex is dependent on binding of ATP.

It is found in the cytoplasm. It catalyses the reaction ATP-dependent cleavage of peptide bonds with broad specificity.. Its activity is regulated as follows. Allosterically activated by HslU binding. Protease subunit of a proteasome-like degradation complex believed to be a general protein degrading machinery. This is ATP-dependent protease subunit HslV from Photobacterium profundum (strain SS9).